A 326-amino-acid chain; its full sequence is Vitamin B12 import system permease protein BtuC (326 aa).

Residues 1 to 10 (MLTLARQQQR) are Cytoplasmic-facing. The helical transmembrane segment at 11–35 (QNIRWLLCLSVLMLLALLLSLCAGE) threads the bilayer. At 36–56 (QWISPGDWFSPRGELFVWQIR) the chain is on the periplasmic side. Residues 57-81 (LPRTLAVLLVGAALAISGAVMQALF) traverse the membrane as a helical segment. Residues 82-92 (ENPLAEPGLLG) are Cytoplasmic-facing. A helical transmembrane segment spans residues 93-107 (VSNGAGVGLIAAVLL). Over 108 to 113 (GQGQLP) the chain is Periplasmic. The helical transmembrane segment at 114 to 138 (NWALGLCAIAGALIITLILLRFARR) threads the bilayer. At 139 to 141 (HLS) the chain is on the cytoplasmic side. The helical transmembrane segment at 142–166 (TSRLLLAGVALGIICSALMTWAIYF) threads the bilayer. Topologically, residues 167 to 190 (STSVDLRQLMYWMMGGFGGVDWRQ) are periplasmic. The helical transmembrane segment at 191-206 (SWLMLALIPMLLWICC) threads the bilayer. At 207–228 (QSRPMNMLALGEISARQLGLPL) the chain is on the cytoplasmic side. The chain crosses the membrane as a helical span at residues 229–249 (WFWRNVLVAATGWMVGVSVAL). The Periplasmic segment spans residues 250–257 (AGAIGFIG). Residues 258–267 (LVIPHILRLC) form a helical membrane-spanning segment. The Cytoplasmic segment spans residues 268 to 274 (GLTDHRA). The helical transmembrane segment at 275 to 296 (LLPGCALAGASALLLADIVARL) threads the bilayer. Topologically, residues 297 to 304 (ALAAAELP) are periplasmic. The helical transmembrane segment at 305 to 324 (IGVVTATLGAPVFIWLLLKA) threads the bilayer. At 325 to 326 (GR) the chain is on the cytoplasmic side.

This sequence belongs to the binding-protein-dependent transport system permease family. FecCD subfamily. As to quaternary structure, the complex is composed of two ATP-binding proteins (BtuD), two transmembrane proteins (BtuC) and a solute-binding protein (BtuF).

Its subcellular location is the cell inner membrane. Its function is as follows. Part of the ABC transporter complex BtuCDF involved in vitamin B12 import. Involved in the translocation of the substrate across the membrane. This Escherichia coli O157:H7 protein is Vitamin B12 import system permease protein BtuC (btuC).